Here is a 610-residue protein sequence, read N- to C-terminus: Mitochondrial import receptor subunit TOM70 (610 aa).

An N-acetylalanine modification is found at alanine 2. At 2-41 (AASKPVEAAMAAAAAPASGNGVGSSGGTAAPGSGAGTLPR) the chain is on the mitochondrial intermembrane side. A helical transmembrane segment spans residues 42 to 62 (WHVALAIGAPLLLGAGAMYLW). The Cytoplasmic portion of the chain corresponds to 63 to 610 (SRRRRRREAG…KKYGLKPPTL (548 aa)). Residues 69-109 (REAGGRGDASGLKRNSERKTPEGRASPALGSGPDGSGDSLE) form a disordered region. Omega-N-methylarginine is present on arginine 74. A compositionally biased stretch (low complexity) spans 93 to 108 (ASPALGSGPDGSGDSL). Residues serine 94, serine 99, serine 104, serine 107, and serine 112 each carry the phosphoserine modification. TPR repeat units follow at residues 116–149 (AQAAKNKGNKYFKAGKYEQAIQCYTEAISLCPTE) and 155–188 (STFYQNRAAAFEQLQKWKEVAQDCTKAVELNPKY). Lysine 187 carries the N6-acetyllysine modification. Lysine 277 is covalently cross-linked (Glycyl lysine isopeptide (Lys-Gly) (interchain with G-Cter in SUMO2)). TPR repeat units follow at residues 296–329 (ENSGYLKAKQYMEEENYDKIISECSKEIDAQGKY), 331–364 (AEALLLRATFYLLIGSANAAKPDLDKVISLKEAN), 369–402 (ANALIKRGTMCMQQQQPMLSTQDFNMAAEIDPMN), 403–436 (SDVYHHRGQLKILLDLVEEAVADFDACIRLRPKF), 444–477 (CFALYRQAYTANNSSQVQAAMKGFEEVIKKFPRC), 478–511 (AEGYALYAQALTDQQQFGKADEMYDKCIDLEPDN), 513–546 (TTYVHKGLLQLQWKQDLDKGLELISKAIEIDNKC), and 547–580 (DFAYETMGTIEVQRGNMEKAIDMFNKAINLAKSE).

This sequence belongs to the Tom70 family. Forms part of the preprotein translocase complex of the outer mitochondrial membrane (TOM complex) which consists of at least 7 different proteins (TOMM5, TOMM6, TOMM7, TOMM20, TOMM22, TOMM40 and TOMM70). Interacts with CAPN8. Interacts with TRADD, TRAF6 and STING. Interacts with MAVS. Interacts with HSPA8 and HSP90AA1; both interactions are required for preprotein mitochondrial import. The interaction with HSP90AA1 is direct and mediates the association of TOMM70 with IRF3 and TBK1. Upon mitochondrial depolarization, interacts with PINK1; the interaction is required for PINK1-TOM-TIM23 supercomplex formation which is critical for PINK1 stabilization at the outer mitochondrial membrane, kinase activation and downstream mitophagy.

The protein resides in the mitochondrion outer membrane. Its function is as follows. Acts as a receptor of the preprotein translocase complex of the outer mitochondrial membrane (TOM complex). Recognizes and mediates the translocation of mitochondrial preproteins from the cytosol into the mitochondria in a chaperone dependent manner. Mediates TBK1 and IRF3 activation induced by MAVS in response to Sendai virus infection and promotes host antiviral responses during virus infection. This Rattus norvegicus (Rat) protein is Mitochondrial import receptor subunit TOM70.